We begin with the raw amino-acid sequence, 425 residues long: Caveolae-associated protein 2 (425 aa).

The disordered stretch occupies residues Met-1–Asn-42. N-acetylglycine is present on Gly-2. Residues Gly-2 to Ala-168 are interaction with CAVIN1. A compositionally biased stretch (basic and acidic residues) spans Lys-10–Lys-22. Phosphoserine occurs at positions 27, 35, 37, and 51. Coiled-coil stretches lie at residues Leu-61–Arg-82 and Thr-125–His-154. The tract at residues Leu-62–Leu-100 is leucine-zipper. Phosphothreonine occurs at positions 196 and 199. 2 disordered regions span residues Thr-199–Ser-234 and Ile-271–Ser-425. 3 positions are modified to phosphoserine: Ser-203, Ser-204, and Ser-218. A compositionally biased stretch (acidic residues) spans Ser-203 to Ala-219. The stretch at His-210–Arg-268 forms a coiled coil. Residues Glu-220 to Ser-234 show a composition bias toward basic and acidic residues. Polar residues predominate over residues Ser-274–Ser-287. 5 positions are modified to phosphoserine: Ser-283, Ser-284, Ser-287, Ser-288, and Ser-293. A compositionally biased stretch (basic and acidic residues) spans Arg-303 to Asp-317. Residues Ser-332, Ser-341, Ser-366, and Ser-370 each carry the phosphoserine modification. A Phosphothreonine modification is found at Thr-375. The span at Ile-376–Val-385 shows a compositional bias: acidic residues. Tyr-395 carries the phosphotyrosine modification. Ser-403 is modified (phosphoserine).

It belongs to the CAVIN family. Component of the CAVIN complex composed of CAVIN1, CAVIN2, CAVIN3 and CAVIN4. Binds to PRKCA in the presence of phosphatidylserine. Interacts with CAVIN4; this augments the transactivation of NPPA by CAVIN4. Interacts with CAVIN1. Interacts with CAV3. In terms of processing, phosphorylated on Ser residues. As to expression, highly expressed in heart and lung, and expressed at lower levels in brain, kidney, liver, pancreas, placenta, and skeletal muscle.

It localises to the cytoplasm. Its subcellular location is the cytosol. The protein resides in the membrane. It is found in the caveola. In terms of biological role, plays an important role in caveolar biogenesis and morphology. Regulates caveolae morphology by inducing membrane curvature within caveolae. Plays a role in caveola formation in a tissue-specific manner. Required for the formation of caveolae in the lung and fat endothelia but not in the heart endothelia. Negatively regulates the size or stability of CAVIN complexes in the lung endothelial cells. May play a role in targeting PRKCA to caveolae. The sequence is that of Caveolae-associated protein 2 from Homo sapiens (Human).